Here is a 346-residue protein sequence, read N- to C-terminus: Holliday junction branch migration complex subunit RuvB (346 aa).

Residues 1–11 (MTEQRTIASSA) are compositionally biased toward polar residues. Residues 1–20 (MTEQRTIASSATREDEAADA) form a disordered region. Residues 1-183 (MTEQRTIASS…FGIVQRLEFY (183 aa)) are large ATPase domain (RuvB-L). Residues Ile22, Arg23, Gly64, Lys67, Thr68, Thr69, 130 to 132 (EDF), Arg173, Tyr183, and Arg220 each bind ATP. Thr68 serves as a coordination point for Mg(2+). A small ATPAse domain (RuvB-S) region spans residues 184 to 254 (SPQELTRIVI…VAQAAMQMLK (71 aa)). Positions 257-346 (PEGFDELDRR…PAIGEPGDLF (90 aa)) are head domain (RuvB-H). 3 residues coordinate DNA: Arg293, Arg312, and Arg317.

The protein belongs to the RuvB family. In terms of assembly, homohexamer. Forms an RuvA(8)-RuvB(12)-Holliday junction (HJ) complex. HJ DNA is sandwiched between 2 RuvA tetramers; dsDNA enters through RuvA and exits via RuvB. An RuvB hexamer assembles on each DNA strand where it exits the tetramer. Each RuvB hexamer is contacted by two RuvA subunits (via domain III) on 2 adjacent RuvB subunits; this complex drives branch migration. In the full resolvosome a probable DNA-RuvA(4)-RuvB(12)-RuvC(2) complex forms which resolves the HJ.

The protein resides in the cytoplasm. It catalyses the reaction ATP + H2O = ADP + phosphate + H(+). Its function is as follows. The RuvA-RuvB-RuvC complex processes Holliday junction (HJ) DNA during genetic recombination and DNA repair, while the RuvA-RuvB complex plays an important role in the rescue of blocked DNA replication forks via replication fork reversal (RFR). RuvA specifically binds to HJ cruciform DNA, conferring on it an open structure. The RuvB hexamer acts as an ATP-dependent pump, pulling dsDNA into and through the RuvAB complex. RuvB forms 2 homohexamers on either side of HJ DNA bound by 1 or 2 RuvA tetramers; 4 subunits per hexamer contact DNA at a time. Coordinated motions by a converter formed by DNA-disengaged RuvB subunits stimulates ATP hydrolysis and nucleotide exchange. Immobilization of the converter enables RuvB to convert the ATP-contained energy into a lever motion, pulling 2 nucleotides of DNA out of the RuvA tetramer per ATP hydrolyzed, thus driving DNA branch migration. The RuvB motors rotate together with the DNA substrate, which together with the progressing nucleotide cycle form the mechanistic basis for DNA recombination by continuous HJ branch migration. Branch migration allows RuvC to scan DNA until it finds its consensus sequence, where it cleaves and resolves cruciform DNA. The polypeptide is Holliday junction branch migration complex subunit RuvB (Xanthomonas campestris pv. campestris (strain 8004)).